Reading from the N-terminus, the 490-residue chain is Protein LMBR1L (490 aa).

At methionine 1–arginine 21 the chain is on the extracellular side. Positions methionine 1–threonine 59 are interaction with LGB. Positions methionine 1–leucine 76 are LCN1-binding. A helical transmembrane segment spans residues glutamate 22–threonine 42. The Cytoplasmic portion of the chain corresponds to arginine 43–glutamate 66. Residues leucine 67–isoleucine 87 form a helical membrane-spanning segment. The Extracellular portion of the chain corresponds to serine 88–asparagine 114. Residues leucine 115–threonine 135 traverse the membrane as a helical segment. At glutamate 136 to threonine 154 the chain is on the cytoplasmic side. The chain crosses the membrane as a helical span at residues valine 155–isoleucine 175. Residues leucine 176–tyrosine 196 are Extracellular-facing. A helical transmembrane segment spans residues leucine 197–leucine 217. Over alanine 218–cysteine 305 the chain is Cytoplasmic. Residues leucine 306–isoleucine 326 traverse the membrane as a helical segment. Residues aspartate 327 to serine 350 lie on the Extracellular side of the membrane. The chain crosses the membrane as a helical span at residues phenylalanine 351–phenylalanine 371. The Cytoplasmic portion of the chain corresponds to tyrosine 372 to alanine 388. The chain crosses the membrane as a helical span at residues methionine 389–phenylalanine 409. The Extracellular segment spans residues serine 410–glycine 431. The helical transmembrane segment at asparagine 432–valine 452 threads the bilayer. The Cytoplasmic portion of the chain corresponds to lysine 453–glutamine 490.

It belongs to the LIMR family. In terms of assembly, dimer. Can also form higher oligomers. Interacts with LCN1; this interaction mediates the endocytosis of LCN1. Interacts with UBAC2, FAF2, VCP, AMFR, ZNRF3, CTNNB1, LRP6, GSK3A, GSK3B, FZD6, DVL2 and RNF43. Interaction with LGB and SCGB1A1 is controversial.

It localises to the cell membrane. Its subcellular location is the endoplasmic reticulum membrane. Plays an essential role in lymphocyte development by negatively regulating the canonical Wnt signaling pathway. In association with UBAC2 and E3 ubiquitin-protein ligase AMFR, promotes the ubiquitin-mediated degradation of CTNNB1 and Wnt receptors FZD6 and LRP6. LMBR1L stabilizes the beta-catenin destruction complex that is required for regulating CTNNB1 levels. Acts as a LCN1 receptor and can mediate its endocytosis. This is Protein LMBR1L (LMBR1L) from Pongo abelii (Sumatran orangutan).